Here is an 87-residue protein sequence, read N- to C-terminus: Small ribosomal subunit protein bS16 (87 aa).

The protein belongs to the bacterial ribosomal protein bS16 family.

The sequence is that of Small ribosomal subunit protein bS16 from Aster yellows witches'-broom phytoplasma (strain AYWB).